Consider the following 446-residue polypeptide: GTPase Der (446 aa).

EngA-type G domains follow at residues 3–168 (PVIA…YAGQ) and 181–354 (IKIA…KAAM). GTP is bound by residues 9–16 (GRPNVGKS), 57–61 (DTGGF), 120–123 (NKAE), 187–194 (GRPNVGKS), 234–238 (DTAGL), and 299–302 (NKWD). The KH-like domain occupies 355-439 (SKLPTPKLTR…PLRIEFRSST (85 aa)).

It belongs to the TRAFAC class TrmE-Era-EngA-EngB-Septin-like GTPase superfamily. EngA (Der) GTPase family. In terms of assembly, associates with the 50S ribosomal subunit.

Functionally, GTPase that plays an essential role in the late steps of ribosome biogenesis. The protein is GTPase Der of Paraburkholderia phymatum (strain DSM 17167 / CIP 108236 / LMG 21445 / STM815) (Burkholderia phymatum).